Reading from the N-terminus, the 95-residue chain is UPF0213 protein ESA_03545 (95 aa).

In terms of domain architecture, GIY-YIG spans 2 to 77 (EEWFLYLIRC…KQLTKRQKEQ (76 aa)).

This sequence belongs to the UPF0213 family.

The polypeptide is UPF0213 protein ESA_03545 (Cronobacter sakazakii (strain ATCC BAA-894) (Enterobacter sakazakii)).